The following is a 532-amino-acid chain: Probable bifunctional tRNA threonylcarbamoyladenosine biosynthesis protein (532 aa).

The tract at residues 1–323 is kae1; sequence MRVLGVEGTA…FRPDEVSVTW (323 aa). Positions 107 and 111 each coordinate Fe cation. L-threonylcarbamoyladenylate contacts are provided by residues 128–132, Asp-160, Gly-173, Glu-177, and Asn-256; that span reads NASGA. A Fe cation-binding site is contributed by Asp-284. The region spanning 329 to 532 is the Protein kinase domain; sequence PARDPGADAV…GRYQDDPETA (204 aa). ATP contacts are provided by residues 338–346 and Lys-355; that span reads VRQGAEATV. The Proton acceptor; for kinase activity role is filled by Asp-444.

The protein in the N-terminal section; belongs to the KAE1 / TsaD family. This sequence in the C-terminal section; belongs to the protein kinase superfamily. Tyr protein kinase family. BUD32 subfamily. As to quaternary structure, component of the KEOPS complex that consists of Kae1, Bud32, Cgi121 and Pcc1; the whole complex dimerizes. Fe(2+) serves as cofactor.

It is found in the cytoplasm. It carries out the reaction L-seryl-[protein] + ATP = O-phospho-L-seryl-[protein] + ADP + H(+). The enzyme catalyses L-threonyl-[protein] + ATP = O-phospho-L-threonyl-[protein] + ADP + H(+). It catalyses the reaction L-threonylcarbamoyladenylate + adenosine(37) in tRNA = N(6)-L-threonylcarbamoyladenosine(37) in tRNA + AMP + H(+). Required for the formation of a threonylcarbamoyl group on adenosine at position 37 (t(6)A37) in tRNAs that read codons beginning with adenine. Is a component of the KEOPS complex that is probably involved in the transfer of the threonylcarbamoyl moiety of threonylcarbamoyl-AMP (TC-AMP) to the N6 group of A37. The Kae1 domain likely plays a direct catalytic role in this reaction. The Bud32 domain probably displays kinase activity that regulates Kae1 function. The chain is Probable bifunctional tRNA threonylcarbamoyladenosine biosynthesis protein from Halobacterium salinarum (strain ATCC 700922 / JCM 11081 / NRC-1) (Halobacterium halobium).